The chain runs to 278 residues: Membrane protein insertase YidC 2 (278 aa).

The first 18 residues, 1 to 18 (MHKRLFITLLGFIILLAG), serve as a signal peptide directing secretion. C19 is lipidated: N-palmitoyl cysteine. C19 carries the S-diacylglycerol cysteine lipid modification. The next 4 membrane-spanning stretches (helical) occupy residues 55–75 (GFAIISIVLIVRFILLPFMLI), 132–152 (MLGCLPVLIQMPILMGLYMSL), 176–196 (LIMTIIAAIMYFVQPLVNSIH), and 224–244 (AAALGLYWSISAAFLIVQMHF).

It belongs to the OXA1/ALB3/YidC family. Type 2 subfamily.

It localises to the cell membrane. In terms of biological role, required for the insertion and/or proper folding and/or complex formation of integral membrane proteins into the membrane. Involved in integration of membrane proteins that insert both dependently and independently of the Sec translocase complex, as well as at least some lipoproteins. This Staphylococcus epidermidis (strain ATCC 12228 / FDA PCI 1200) protein is Membrane protein insertase YidC 2.